Consider the following 561-residue polypeptide: Trehalose-6-phosphate hydrolase (561 aa).

The active-site Nucleophile is aspartate 203. Catalysis depends on glutamate 254, which acts as the Proton donor.

The protein belongs to the glycosyl hydrolase 13 family.

It is found in the cytoplasm. It carries out the reaction alpha,alpha-trehalose 6-phosphate + H2O = D-glucose 6-phosphate + D-glucose. Its activity is regulated as follows. Activity is stimulated by high salt concentrations with different efficiencies depending on the kind of salt. In vitro, inhibited by glucose. Its function is as follows. Hydrolyzes trehalose-6-phosphate to glucose and glucose 6-phosphate. Can also very effectively hydrolyze p-nitrophenyl-alpha-D-glucopyranoside, but not lactose, maltose, sucrose or sucrose-6-phosphate. Trehalose is also hydrolyzed, but to a much smaller extent than trehalose-6-phosphate. The chain is Trehalose-6-phosphate hydrolase from Bacillus subtilis (strain 168).